Consider the following 137-residue polypeptide: Basic phospholipase A2 DsM-S1 (137 aa).

An N-terminal signal peptide occupies residues 1 to 16 (MRTLWIVAVCLIGVEG). Cystine bridges form between C42-C131, C44-C60, C59-C111, C65-C137, C66-C104, C73-C97, and C91-C102. Residues Y43, G45, and G47 each contribute to the Ca(2+) site. Residue H63 is part of the active site. D64 serves as a coordination point for Ca(2+). The active site involves D105.

The protein belongs to the phospholipase A2 family. Group II subfamily. D49 sub-subfamily. The cofactor is Ca(2+). Expressed by the venom gland.

Its subcellular location is the secreted. It catalyses the reaction a 1,2-diacyl-sn-glycero-3-phosphocholine + H2O = a 1-acyl-sn-glycero-3-phosphocholine + a fatty acid + H(+). Its function is as follows. Snake venom phospholipase A2 (PLA2) that is neurotoxic. PLA2 catalyzes the calcium-dependent hydrolysis of the 2-acyl groups in 3-sn-phosphoglycerides. The chain is Basic phospholipase A2 DsM-S1 from Daboia siamensis (Eastern Russel's viper).